The primary structure comprises 150 residues: Urease accessory protein UreE (150 aa).

The protein belongs to the UreE family.

It is found in the cytoplasm. Functionally, involved in urease metallocenter assembly. Binds nickel. Probably functions as a nickel donor during metallocenter assembly. The protein is Urease accessory protein UreE of Staphylococcus epidermidis (strain ATCC 35984 / DSM 28319 / BCRC 17069 / CCUG 31568 / BM 3577 / RP62A).